Reading from the N-terminus, the 379-residue chain is MAKKTKKAEEITKKFGDERRKALDDALKNIEKDFGKGAVMRLGERAEQKVQVMSSGSLALDIALGAGGYPKGRIVEIYGPESSGKTTVALHAVAQAQKEGGIAAFIDAEHALDPAYAAALGVNIDELLLSQPDSGEQGLEIAGKLIDSGAVDLVVVDSVAALVPRAEIDGDIGDSHVGLQARMMSQAMRKLSASINKTKTIAIFINQLREKVGVMFGNPETTPGGRALKFYSSVRLDVRGNTQIKGTGEHKDHNVGKETKIKVVKNKVAPPFREAFVEIMYGEGISRTGELIKIASDLDIIQKAGAWYSYNGEKIGQGSENAKKYLADNPAIFDEIDHKVRVHFGMTEDDSPVQSELVEEKNEADDLVLDLDNAIEIEE.

Residue 79-86 participates in ATP binding; it reads GPESSGKT.

It belongs to the RecA family.

It localises to the cytoplasm. Functionally, can catalyze the hydrolysis of ATP in the presence of single-stranded DNA, the ATP-dependent uptake of single-stranded DNA by duplex DNA, and the ATP-dependent hybridization of homologous single-stranded DNAs. It interacts with LexA causing its activation and leading to its autocatalytic cleavage. The sequence is that of Protein RecA from Streptococcus agalactiae serotype III (strain NEM316).